We begin with the raw amino-acid sequence, 318 residues long: Aspartate carbamoyltransferase catalytic subunit (318 aa).

Carbamoyl phosphate-binding residues include R58 and T59. K86 lines the L-aspartate pocket. Carbamoyl phosphate contacts are provided by R108, H141, and Q144. Residues R174 and R226 each coordinate L-aspartate. Residues G270 and P271 each coordinate carbamoyl phosphate.

This sequence belongs to the aspartate/ornithine carbamoyltransferase superfamily. ATCase family. In terms of assembly, heterododecamer (2C3:3R2) of six catalytic PyrB chains organized as two trimers (C3), and six regulatory PyrI chains organized as three dimers (R2).

The catalysed reaction is carbamoyl phosphate + L-aspartate = N-carbamoyl-L-aspartate + phosphate + H(+). It participates in pyrimidine metabolism; UMP biosynthesis via de novo pathway; (S)-dihydroorotate from bicarbonate: step 2/3. Its function is as follows. Catalyzes the condensation of carbamoyl phosphate and aspartate to form carbamoyl aspartate and inorganic phosphate, the committed step in the de novo pyrimidine nucleotide biosynthesis pathway. The sequence is that of Aspartate carbamoyltransferase catalytic subunit from Lactobacillus acidophilus (strain ATCC 700396 / NCK56 / N2 / NCFM).